A 65-amino-acid polypeptide reads, in one-letter code: Cell death protein rpr (65 aa).

In terms of assembly, interacts with Diap2 (via BIR2 domain).

Functionally, activator of apoptosis, as well as grim and hid, that acts on the effector Dredd. In Drosophila melanogaster (Fruit fly), this protein is Cell death protein rpr (rpr).